Reading from the N-terminus, the 469-residue chain is Ribulose bisphosphate carboxylase large chain (469 aa).

Lys-8 carries the N6,N6,N6-trimethyllysine modification. Substrate-binding residues include Asn-117 and Thr-167. Lys-169 acts as the Proton acceptor in catalysis. Lys-171 lines the substrate pocket. Mg(2+) contacts are provided by Lys-195, Asp-197, and Glu-198. At Lys-195 the chain carries N6-carboxylysine. His-288 (proton acceptor) is an active-site residue. Substrate is bound by residues Arg-289, His-321, and Ser-373.

This sequence belongs to the RuBisCO large chain family. Type I subfamily. As to quaternary structure, heterohexadecamer of 8 large chains and 8 small chains; disulfide-linked. The disulfide link is formed within the large subunit homodimers. The cofactor is Mg(2+). Post-translationally, the disulfide bond which can form in the large chain dimeric partners within the hexadecamer appears to be associated with oxidative stress and protein turnover.

It localises to the plastid. It is found in the chloroplast. It carries out the reaction 2 (2R)-3-phosphoglycerate + 2 H(+) = D-ribulose 1,5-bisphosphate + CO2 + H2O. It catalyses the reaction D-ribulose 1,5-bisphosphate + O2 = 2-phosphoglycolate + (2R)-3-phosphoglycerate + 2 H(+). RuBisCO catalyzes two reactions: the carboxylation of D-ribulose 1,5-bisphosphate, the primary event in carbon dioxide fixation, as well as the oxidative fragmentation of the pentose substrate in the photorespiration process. Both reactions occur simultaneously and in competition at the same active site. The sequence is that of Ribulose bisphosphate carboxylase large chain from Coleonema pulchellum (Confetti bush).